Reading from the N-terminus, the 57-residue chain is Preprotein translocase subunit SecG (57 aa).

Residues 1–33 (MARRRKYEGLNPFVAAGLIKFSEEGELERIKLN) are Cytoplasmic-facing. The helical transmembrane segment at 34-55 (PRTAILVSITVIIAILVLNILH) threads the bilayer. Over 56–57 (PL) the chain is Extracellular.

Belongs to the SEC61-beta family. Component of the protein translocase complex. Heterotrimer consisting of alpha (SecY), beta (SecG) and gamma (SecE) subunits. Can form oligomers of the heterotrimer.

It is found in the cell membrane. Involved in protein export. The function of the beta subunit is unknown, but it may be involved in stabilization of the trimeric complex. The chain is Preprotein translocase subunit SecG from Pyrobaculum islandicum (strain DSM 4184 / JCM 9189 / GEO3).